The sequence spans 131 residues: Small ribosomal subunit protein uS8 (131 aa).

It belongs to the universal ribosomal protein uS8 family. As to quaternary structure, part of the 30S ribosomal subunit. Contacts proteins S5 and S12.

Functionally, one of the primary rRNA binding proteins, it binds directly to 16S rRNA central domain where it helps coordinate assembly of the platform of the 30S subunit. The protein is Small ribosomal subunit protein uS8 of Burkholderia ambifaria (strain MC40-6).